Reading from the N-terminus, the 156-residue chain is Snaclec A1 (156 aa).

The first 23 residues, 1-23, serve as a signal peptide directing secretion; that stretch reads MGRSISVSFGLLVVFLSLSGTGA. Disulfide bonds link Cys27–Cys38, Cys55–Cys154, and Cys129–Cys146. The C-type lectin domain occupies 34 to 155; the sequence is HEGHCYKVFN…CGQPYRFTCE (122 aa).

It belongs to the snaclec family. As to quaternary structure, heterodimer; disulfide-linked. As to expression, expressed by the venom gland.

The protein localises to the secreted. Interferes with one step of hemostasis (modulation of platelet aggregation, or coagulation cascade, for example). The chain is Snaclec A1 from Macrovipera lebetinus (Levantine viper).